Consider the following 121-residue polypeptide: Small ribosomal subunit protein uS13 (121 aa).

Residues 94–121 (GLPVRGQRTRTNSRTRKGPKKGAAALKK) form a disordered region.

It belongs to the universal ribosomal protein uS13 family. In terms of assembly, part of the 30S ribosomal subunit. Forms a loose heterodimer with protein S19. Forms two bridges to the 50S subunit in the 70S ribosome.

In terms of biological role, located at the top of the head of the 30S subunit, it contacts several helices of the 16S rRNA. In the 70S ribosome it contacts the 23S rRNA (bridge B1a) and protein L5 of the 50S subunit (bridge B1b), connecting the 2 subunits; these bridges are implicated in subunit movement. Contacts the tRNAs in the A and P-sites. This chain is Small ribosomal subunit protein uS13, found in Leptothrix cholodnii (strain ATCC 51168 / LMG 8142 / SP-6) (Leptothrix discophora (strain SP-6)).